Consider the following 817-residue polypeptide: DNA gyrase subunit A (817 aa).

Residues 39-505 (LPDARDGLKP…AVEDVSIEDL (467 aa)) form the Topo IIA-type catalytic domain. The active-site O-(5'-phospho-DNA)-tyrosine intermediate is the Y127. The GyrA-box motif lies at 532–538 (QGRGGKG).

The protein belongs to the type II topoisomerase GyrA/ParC subunit family. In terms of assembly, heterotetramer, composed of two GyrA and two GyrB chains. In the heterotetramer, GyrA contains the active site tyrosine that forms a transient covalent intermediate with DNA, while GyrB binds cofactors and catalyzes ATP hydrolysis.

The protein resides in the cytoplasm. The catalysed reaction is ATP-dependent breakage, passage and rejoining of double-stranded DNA.. Functionally, a type II topoisomerase that negatively supercoils closed circular double-stranded (ds) DNA in an ATP-dependent manner to modulate DNA topology and maintain chromosomes in an underwound state. Negative supercoiling favors strand separation, and DNA replication, transcription, recombination and repair, all of which involve strand separation. Also able to catalyze the interconversion of other topological isomers of dsDNA rings, including catenanes and knotted rings. Type II topoisomerases break and join 2 DNA strands simultaneously in an ATP-dependent manner. This is DNA gyrase subunit A from Aminobacterium colombiense (strain DSM 12261 / ALA-1).